A 282-amino-acid polypeptide reads, in one-letter code: ATP synthase gamma chain (282 aa).

The protein belongs to the ATPase gamma chain family. As to quaternary structure, F-type ATPases have 2 components, CF(1) - the catalytic core - and CF(0) - the membrane proton channel. CF(1) has five subunits: alpha(3), beta(3), gamma(1), delta(1), epsilon(1). CF(0) has three main subunits: a, b and c.

Its subcellular location is the cell membrane. Its function is as follows. Produces ATP from ADP in the presence of a proton gradient across the membrane. The gamma chain is believed to be important in regulating ATPase activity and the flow of protons through the CF(0) complex. In Clostridium botulinum (strain Kyoto / Type A2), this protein is ATP synthase gamma chain.